The sequence spans 380 residues: Chaperone protein DnaJ (380 aa).

The region spanning 5-70 is the J domain; the sequence is DFYETLGVSK…QKRAAYDRFG (66 aa). The segment at 141–219 adopts a CR-type zinc-finger fold; sequence GKTAQIRVPT…CHGQGRVTEE (79 aa). Positions 154, 157, 171, 174, 193, 196, 207, and 210 each coordinate Zn(2+). 4 CXXCXGXG motif repeats span residues 154–161, 171–178, 193–200, and 207–214; these read CEVCSGSG, CATCQGSG, CPTCQGRG, and CGKCHGQG.

Belongs to the DnaJ family. In terms of assembly, homodimer. Zn(2+) serves as cofactor.

Its subcellular location is the cytoplasm. In terms of biological role, participates actively in the response to hyperosmotic and heat shock by preventing the aggregation of stress-denatured proteins and by disaggregating proteins, also in an autonomous, DnaK-independent fashion. Unfolded proteins bind initially to DnaJ; upon interaction with the DnaJ-bound protein, DnaK hydrolyzes its bound ATP, resulting in the formation of a stable complex. GrpE releases ADP from DnaK; ATP binding to DnaK triggers the release of the substrate protein, thus completing the reaction cycle. Several rounds of ATP-dependent interactions between DnaJ, DnaK and GrpE are required for fully efficient folding. Also involved, together with DnaK and GrpE, in the DNA replication of plasmids through activation of initiation proteins. In Allorhizobium ampelinum (strain ATCC BAA-846 / DSM 112012 / S4) (Agrobacterium vitis (strain S4)), this protein is Chaperone protein DnaJ.